Consider the following 84-residue polypeptide: Carboxysome shell vertex protein CsoS4B (84 aa).

The BMV domain maps to 1-77; that stretch reads MQILQVKKQL…TDLTVGGIID (77 aa).

Belongs to the CcmL/EutN family. CsoS4 subfamily. In terms of assembly, homopentamer.

It localises to the carboxysome. Its function is as follows. Probably forms vertices in the carboxysome, a polyhedral inclusion where RuBisCO (ribulose bisphosphate carboxylase, cbbL-cbbS) is sequestered. Has been modeled to induce curvature upon insertion into an otherwise flat hexagonal layer of major carboxysome subunits. In Hydrogenovibrio crunogenus (strain DSM 25203 / XCL-2) (Thiomicrospira crunogena), this protein is Carboxysome shell vertex protein CsoS4B.